We begin with the raw amino-acid sequence, 329 residues long: Type 2 lactosamine alpha-2,3-sialyltransferase (329 aa).

Topologically, residues 1-4 are cytoplasmic; sequence MKGY. Residues 5–25 form a helical; Signal-anchor for type II membrane protein membrane-spanning segment; sequence LVAIFLSSIFLYYVLYCILWG. Over 26 to 329 the chain is Lumenal; the sequence is TNGYWFPAEE…IKKKMVINLT (304 aa). N-linked (GlcNAc...) asparagine glycans are attached at residues N129, N181, N295, and N308.

The protein belongs to the glycosyltransferase 29 family.

The protein resides in the golgi apparatus membrane. It catalyses the reaction a neolactoside nLc4Cer(d18:1(4E)) + CMP-N-acetyl-beta-neuraminate = a neolactoside IV(3)-alpha-NeuAc-nLc4Cer(d18:1(4E)) + CMP + H(+). The catalysed reaction is a beta-D-galactosyl-(1-&gt;4)-N-acetyl-beta-D-glucosaminyl derivative + CMP-N-acetyl-beta-neuraminate = an N-acetyl-alpha-neuraminyl-(2-&gt;3)-beta-D-galactosyl-(1-&gt;4)-N-acetyl-beta-D-glucosaminyl derivative + CMP + H(+). The enzyme catalyses a neolactoside nLc6Cer(d18:1(4E)) + CMP-N-acetyl-beta-neuraminate = a neolactoside VI(3)-alpha-NeuNAc-nLc6Cer(d18:1(4E)) + CMP + H(+). Transfers the sialyl residue from CMP-N-acetyl-beta-neuraminate to the terminal galactose residue on sugar chains of glycoproteins and glycolipids. It's alpha-2,3-sialyltransferase activity is specific toward type II glycan chains (Galbeta1-4GlcNAc) on glycoproteins and glycolipids such as neolactosides nLc4Cer and nLc6Cer, whose sialyl-products serve as precursors for the Lewis X antigen. Critically involved in the synthesis of functional selectin ligands needed for neutrophil recruitment during inflammation and lymphocyte homing to the lymph nodes. The protein is Type 2 lactosamine alpha-2,3-sialyltransferase (St3gal6) of Mus musculus (Mouse).